The sequence spans 376 residues: Acetate kinase (376 aa).

Mg(2+) is bound at residue N7. Residue K14 participates in ATP binding. R71 serves as a coordination point for substrate. The active-site Proton donor/acceptor is D128. Residues 188–192, 262–264, and 310–314 contribute to the ATP site; these read HLGNG, DFR, and GVGEN. E364 is a Mg(2+) binding site.

Belongs to the acetokinase family. Homodimer. The cofactor is Mg(2+). Requires Mn(2+) as cofactor.

It is found in the cytoplasm. The catalysed reaction is acetate + ATP = acetyl phosphate + ADP. It functions in the pathway metabolic intermediate biosynthesis; acetyl-CoA biosynthesis; acetyl-CoA from acetate: step 1/2. Functionally, catalyzes the formation of acetyl phosphate from acetate and ATP. Can also catalyze the reverse reaction. The protein is Acetate kinase of Mycolicibacterium smegmatis (strain ATCC 700084 / mc(2)155) (Mycobacterium smegmatis).